Here is a 326-residue protein sequence, read N- to C-terminus: tRNA-modifying protein YgfZ (326 aa).

Trp27 and Trp189 together coordinate folate.

This sequence belongs to the tRNA-modifying YgfZ family.

It localises to the cytoplasm. Its function is as follows. Folate-binding protein involved in regulating the level of ATP-DnaA and in the modification of some tRNAs. It is probably a key factor in regulatory networks that act via tRNA modification, such as initiation of chromosomal replication. The polypeptide is tRNA-modifying protein YgfZ (Salmonella schwarzengrund (strain CVM19633)).